The primary structure comprises 267 residues: Phosphate import ATP-binding protein PstB 1 (267 aa).

The ABC transporter domain occupies 21–262 (LETKDLHVYY…AALQSTSDYV (242 aa)). 53–60 (GPSGCGKS) serves as a coordination point for ATP.

This sequence belongs to the ABC transporter superfamily. Phosphate importer (TC 3.A.1.7) family. The complex is composed of two ATP-binding proteins (PstB), two transmembrane proteins (PstC and PstA) and a solute-binding protein (PstS).

It is found in the cell membrane. The enzyme catalyses phosphate(out) + ATP + H2O = ADP + 2 phosphate(in) + H(+). Its function is as follows. Part of the ABC transporter complex PstSACB involved in phosphate import. Responsible for energy coupling to the transport system. The chain is Phosphate import ATP-binding protein PstB 1 from Streptococcus thermophilus (strain CNRZ 1066).